A 357-amino-acid chain; its full sequence is Dual-specificity RNA methyltransferase RlmN (357 aa).

Glu-89 acts as the Proton acceptor in catalysis. The region spanning 109 to 340 is the Radical SAM core domain; sequence EGEKYTVCVS…CTIRESKALD (232 aa). Cysteines 116 and 345 form a disulfide. Cys-123, Cys-127, and Cys-130 together coordinate [4Fe-4S] cluster. S-adenosyl-L-methionine-binding positions include 173–174, Ser-203, 226–228, and Asn-302; these read GE and SLH. The active-site S-methylcysteine intermediate is the Cys-345.

Belongs to the radical SAM superfamily. RlmN family. [4Fe-4S] cluster serves as cofactor.

It localises to the cytoplasm. The catalysed reaction is adenosine(2503) in 23S rRNA + 2 reduced [2Fe-2S]-[ferredoxin] + 2 S-adenosyl-L-methionine = 2-methyladenosine(2503) in 23S rRNA + 5'-deoxyadenosine + L-methionine + 2 oxidized [2Fe-2S]-[ferredoxin] + S-adenosyl-L-homocysteine. It catalyses the reaction adenosine(37) in tRNA + 2 reduced [2Fe-2S]-[ferredoxin] + 2 S-adenosyl-L-methionine = 2-methyladenosine(37) in tRNA + 5'-deoxyadenosine + L-methionine + 2 oxidized [2Fe-2S]-[ferredoxin] + S-adenosyl-L-homocysteine. Its function is as follows. Specifically methylates position 2 of adenine 2503 in 23S rRNA and position 2 of adenine 37 in tRNAs. m2A2503 modification seems to play a crucial role in the proofreading step occurring at the peptidyl transferase center and thus would serve to optimize ribosomal fidelity. In Helicobacter pylori (strain HPAG1), this protein is Dual-specificity RNA methyltransferase RlmN.